We begin with the raw amino-acid sequence, 162 residues long: Larval cuticle protein F1 (162 aa).

A run of 4 repeats spans residues 27–30 (AAPV), 43–46 (AAPV), 59–62 (AAPV), and 75–78 (AAPA).

Component of the larval cuticle. The chain is Larval cuticle protein F1 from Tenebrio molitor (Yellow mealworm beetle).